The sequence spans 423 residues: Peroxisomal membrane protein PMP47A (423 aa).

Solcar repeat units follow at residues Y6–T120, L142–F230, and I239–L373. The helical transmembrane segment at A12–L32 threads the bilayer. Over residues K43–S53 the composition is skewed to basic and acidic residues. The interval K43 to S70 is disordered. Residues E55 to S70 are compositionally biased toward polar residues. Helical transmembrane passes span S98–G118, M148–A168, F204–F224, and L245–L265. The disordered stretch occupies residues S278–K308. The chain crosses the membrane as a helical span at residues L353–L373.

It belongs to the mitochondrial carrier (TC 2.A.29) family.

It is found in the peroxisome membrane. Its function is as follows. May have transport activity. This is Peroxisomal membrane protein PMP47A (PMP47A) from Candida boidinii (Yeast).